Here is a 305-residue protein sequence, read N- to C-terminus: tRNA pseudouridine synthase B (305 aa).

Asp-39 (nucleophile) is an active-site residue.

The protein belongs to the pseudouridine synthase TruB family. Type 1 subfamily.

It carries out the reaction uridine(55) in tRNA = pseudouridine(55) in tRNA. Responsible for synthesis of pseudouridine from uracil-55 in the psi GC loop of transfer RNAs. In Staphylococcus aureus (strain Mu50 / ATCC 700699), this protein is tRNA pseudouridine synthase B.